Consider the following 639-residue polypeptide: Mediator of RNA polymerase II transcription subunit 17 (639 aa).

Over residues 32–43 the composition is skewed to polar residues; the sequence is ASATVTTNGTTA. Disordered regions lie at residues 32 to 68 and 130 to 159; these read ASAT…EEHS and MGDA…NNDS. Residues 48–57 are compositionally biased toward low complexity; the sequence is DSGSQQSVSS. Residues 58–68 are compositionally biased toward polar residues; the sequence is APIQQNSEEHS. Residues 245-271 are a coiled coil; it reads WKLRSLEDSKALLKENYAKLQKSLEVE.

The protein belongs to the Mediator complex subunit 17 family. As to quaternary structure, component of the Mediator complex.

It is found in the nucleus. Component of the Mediator complex, a coactivator involved in the regulated transcription of nearly all RNA polymerase II-dependent genes. Mediator functions as a bridge to convey information from gene-specific regulatory proteins to the basal RNA polymerase II transcription machinery. Mediator is recruited to promoters by direct interactions with regulatory proteins and serves as a scaffold for the assembly of a functional preinitiation complex with RNA polymerase II and the general transcription factors. In Eremothecium gossypii (strain ATCC 10895 / CBS 109.51 / FGSC 9923 / NRRL Y-1056) (Yeast), this protein is Mediator of RNA polymerase II transcription subunit 17 (SRB4).